The primary structure comprises 318 residues: Glutathione synthetase (318 aa).

The region spanning 133-317 (KMYALQFTSV…LGQQVMAWLF (185 aa)) is the ATP-grasp domain. 159–215 (VQQQGMAVLKPLGGKGGEGILFLQAGDRNLNSMIEISTQRGQLPVMLQEYLPAAKEG) contributes to the ATP binding site. 2 residues coordinate Mg(2+): Glu-288 and Asn-290.

It belongs to the prokaryotic GSH synthase family. It depends on Mg(2+) as a cofactor. Mn(2+) is required as a cofactor.

The catalysed reaction is gamma-L-glutamyl-L-cysteine + glycine + ATP = glutathione + ADP + phosphate + H(+). The protein operates within sulfur metabolism; glutathione biosynthesis; glutathione from L-cysteine and L-glutamate: step 2/2. The polypeptide is Glutathione synthetase (Thermosynechococcus vestitus (strain NIES-2133 / IAM M-273 / BP-1)).